A 508-amino-acid chain; its full sequence is MGLPWYRVHTVVLNDPGRLIAVHLMHTALVAGWAGSMALYELAIFDPSDAVLNPMWRQGMFVLPFMARLGVTQSWGGWSITGETAVDPGYWSFEGVAIAHIVLSGLLFLAAVWHWVYWDLELFTDPRTGEPALDLPKMFGIHLFLSGLLCFGFGAFHLSGLWGPGMWVSDPYGLTGHVQPVAPAWGPEGFNPFNPGGIVAHHIAAGVVGIVAGLFHLTVRPPERLYKALRMGNIETVLSSSLAAVFFAAFVVAGTMWYGNAATPVELFGPTRYQWDQGYFRQEIARRVDTAVASGASLEEAWSSIPEKLAFYDYVGNSPAKGGLFRTGQMNKGDGIAQGWLGHAVFKDKNGDVLDVRRLPNFFENFPIVLTDSKGAVRADIPFRRAEAKFSFEETGITASFYGGSLNGQTITDPAQVKKYARKAQLGEAFEFDTETLNSDGVFRTSPRGWFTFGHASFALLFFFGHIWHGSRTLFRDVFAGIEADLGEQIEFGAFQKLGDPTTRKTAA.

A run of 6 helical transmembrane segments spans residues 21-36, 101-115, 140-156, 203-218, 237-252, and 457-472; these read AVHL…WAGS, IVLS…VWHW, GIHL…FGAF, IAAG…FHLT, VLSS…AFVV, and SFAL…HGSR.

Belongs to the PsbB/PsbC family. PsbB subfamily. In terms of assembly, PSII is composed of 1 copy each of membrane proteins PsbA, PsbB, PsbC, PsbD, PsbE, PsbF, PsbH, PsbI, PsbJ, PsbK, PsbL, PsbM, PsbT, PsbX, PsbY, PsbZ, Psb30/Ycf12, peripheral proteins PsbO, CyanoQ (PsbQ), PsbU, PsbV and a large number of cofactors. It forms dimeric complexes. Binds multiple chlorophylls. PSII binds additional chlorophylls, carotenoids and specific lipids. serves as cofactor.

The protein resides in the cellular thylakoid membrane. Functionally, one of the components of the core complex of photosystem II (PSII). It binds chlorophyll and helps catalyze the primary light-induced photochemical processes of PSII. PSII is a light-driven water:plastoquinone oxidoreductase, using light energy to abstract electrons from H(2)O, generating O(2) and a proton gradient subsequently used for ATP formation. The sequence is that of Photosystem II CP47 reaction center protein from Synechococcus elongatus (strain ATCC 33912 / PCC 7942 / FACHB-805) (Anacystis nidulans R2).